Consider the following 748-residue polypeptide: Protein REPRESSOR OF SILENCING 3 (748 aa).

One can recognise an RRM domain in the interval 10-86 (VRLHVGGLGE…GRLRLEKAKE (77 aa)). Disordered regions lie at residues 244–318 (KSIL…QSID), 350–531 (GSSK…VSDT), 579–600 (VDEE…GGSS), and 729–748 (EWAK…NSEE). The span at 266-288 (THPSKNRQTISLEETGRQESSQA) shows a compositional bias: polar residues. The span at 294-314 (KPSEVVPDKSSDEPSRTKDLE) shows a compositional bias: basic and acidic residues. Positions 373–382 (LKKKTKRKRV) are enriched in basic residues. Acidic residues-rich tracts occupy residues 403-416 (DTMA…DSDA), 439-472 (DDSD…DAVE), and 491-518 (ESDD…DVGS). Over residues 520 to 531 (DSGSLADTVSDT) the composition is skewed to polar residues.

Ubiquitously expressed.

The protein resides in the nucleus. It is found in the nucleolus. The protein localises to the nucleoplasm. Its function is as follows. RNA-binding protein required for DNA demethylation and to eluviate siRNA-mediated transcriptional gene silencing (TGS), probably by guiding ROS1. Can bind specifically single stranded G-rich RNAs of 21-, 24- or 26-nt corresponding to promoter sequence of target genes; this interaction directs demethylation of target sequences. This Arabidopsis thaliana (Mouse-ear cress) protein is Protein REPRESSOR OF SILENCING 3.